The following is a 318-amino-acid chain: UAP56-interacting factor (318 aa).

The residue at position 1 (M1) is an N-acetylmethionine. Residues 1–25 (MNRFGTRLVGATATSSPPPKARSNE) are disordered. At T14 the chain carries Phosphothreonine. Phosphoserine occurs at positions 16 and 23. Positions 26–44 (NLDKIDMSLDDIIKLNRKE) match the UAP56-binding motif motif. S61 carries the post-translational modification Phosphoserine. The interval 79–100 (GFGKTSLNRRGRVMPGKRRPNG) is disordered. A compositionally biased stretch (basic residues) spans 85–98 (LNRRGRVMPGKRRP). The residue at position 118 (S118) is a Phosphoserine. K140 participates in a covalent cross-link: Glycyl lysine isopeptide (Lys-Gly) (interchain with G-Cter in SUMO1). K261 participates in a covalent cross-link: Glycyl lysine isopeptide (Lys-Gly) (interchain with G-Cter in SUMO2).

The protein belongs to the UIF family. As to quaternary structure, interacts with CHTOP. Interacts with DDX39B/UAP56 and NXF1; interaction with DDX39B/UAP56 and NXF1 are mutually exclusive. Interacts with SSRP1; required for its recruitment to mRNAs. As to expression, expressed in a wide variety of cancer types.

Its subcellular location is the nucleus. The protein localises to the nucleoplasm. The protein resides in the nucleus speckle. Functionally, required for mRNA export from the nucleus to the cytoplasm. Acts as an adapter that uses the DDX39B/UAP56-NFX1 pathway to ensure efficient mRNA export and delivering to the nuclear pore. Associates with spliced and unspliced mRNAs simultaneously with ALYREF/THOC4. In Homo sapiens (Human), this protein is UAP56-interacting factor (FYTTD1).